We begin with the raw amino-acid sequence, 270 residues long: Interleukin-1 beta (270 aa).

A propeptide spanning residues 1–118 is cleaved from the precursor; the sequence is MATVPEPTSE…VYDDDAFVCD (118 aa).

This sequence belongs to the IL-1 family. Monomer. In its precursor form, weakly interacts with full-length MEFV; the mature cytokine does not interact at all. Interacts with integrins ITGAV:ITGBV and ITGA5:ITGB1; integrin-binding is required for IL1B signaling. Interacts with cargo receptor TMED10; the interaction is direct and is required for the secretion of IL1B mature form. Interacts with HSP90AB1; the interaction facilitates cargo translocation into the ERGIC. Interacts with HSP90B1; the interaction facilitates cargo translocation into the ERGIC.

It is found in the cytoplasm. It localises to the cytosol. The protein resides in the secreted. Its subcellular location is the lysosome. The protein localises to the extracellular exosome. In terms of biological role, potent pro-inflammatory cytokine. Initially discovered as the major endogenous pyrogen, induces prostaglandin synthesis, neutrophil influx and activation, T-cell activation and cytokine production, B-cell activation and antibody production, and fibroblast proliferation and collagen production. Promotes Th17 differentiation of T-cells. Synergizes with IL12/interleukin-12 to induce IFNG synthesis from T-helper 1 (Th1) cells. Plays a role in angiogenesis by inducing VEGF production synergistically with TNF and IL6. Involved in transduction of inflammation downstream of pyroptosis: its mature form is specifically released in the extracellular milieu by passing through the gasdermin-D (GSDMD) pore. In Phoca vitulina richardii (Pacific harbor seal), this protein is Interleukin-1 beta (IL1B).